Reading from the N-terminus, the 353-residue chain is (3aS,4S,5R,7aS)-5-hydroxy-7a-methyl-1-oxo-octahydro-1H-indene-4-carboxyl-CoA dehydrogenase (353 aa).

FMN-binding positions include 22–24, 171–173, and 194–195; these read GMG, AGG, and GT.

Belongs to the nitronate monooxygenase family.

It catalyses the reaction (3aS,4S,5R,7aS)-5-hydroxy-7a-methyl-1-oxo-octahydro-1H-indene-4-carboxyl-CoA + NAD(+) = (5R,7aS)-5-hydroxy-7a-methyl-1-oxo-2,3,5,6,7,7a-hexahydro-1H-indene-carboxyl-CoA + NADH + H(+). Its pathway is steroid metabolism; cholesterol degradation. Its function is as follows. Involved in the final steps of cholesterol and steroid degradation. Probably catalyzes the introduction of a double bound into the C ring of 5OH-HIC-CoA, leading to the formation of (5R,7aS)-5-hydroxy-7a-methyl-1-oxo-3,5,6,7-tetrahydro-2H-indene-4-carboxyl-CoA. In Rhodococcus jostii (strain RHA1), this protein is (3aS,4S,5R,7aS)-5-hydroxy-7a-methyl-1-oxo-octahydro-1H-indene-4-carboxyl-CoA dehydrogenase.